A 205-amino-acid polypeptide reads, in one-letter code: Small ribosomal subunit protein uS4 (205 aa).

The tract at residues 27–46 is disordered; that stretch reads LNKRDYAPGQHGQRRKGKPS. The region spanning 118–178 is the S4 RNA-binding domain; the sequence is HGHVLVNGKR…HVDHRLMKGT (61 aa).

It belongs to the universal ribosomal protein uS4 family. In terms of assembly, part of the 30S ribosomal subunit. Contacts protein S5. The interaction surface between S4 and S5 is involved in control of translational fidelity.

One of the primary rRNA binding proteins, it binds directly to 16S rRNA where it nucleates assembly of the body of the 30S subunit. Its function is as follows. With S5 and S12 plays an important role in translational accuracy. This chain is Small ribosomal subunit protein uS4, found in Granulibacter bethesdensis (strain ATCC BAA-1260 / CGDNIH1).